Consider the following 451-residue polypeptide: AP-3 complex subunit mu (451 aa).

An MHD domain is found at 191–450; sequence NNEIYVDLVE…TSRAGDYIVR (260 aa).

Belongs to the adaptor complexes medium subunit family. Adaptor protein complex 3 (AP-3) is a heterotetramer composed of 2 large adaptins (APL5 and APL6), a medium adaptin (APM3) and a small adaptin (APS3).

The protein resides in the golgi apparatus. It localises to the cytoplasmic vesicle membrane. Functionally, part of the AP-3 complex, an adaptor-related complex which is not clathrin-associated. The complex is associated with the Golgi region as well as more peripheral structures. It facilitates the budding of vesicles from the Golgi membrane and may be directly involved in trafficking to the vacuole. The protein is AP-3 complex subunit mu (APM3) of Eremothecium gossypii (strain ATCC 10895 / CBS 109.51 / FGSC 9923 / NRRL Y-1056) (Yeast).